The following is a 106-amino-acid chain: UPF0060 membrane protein RHE_CH01408 (106 aa).

The next 4 helical transmembrane spans lie at 4–24 (IIYA…WAWL), 30–50 (AWWL…LTLV), 59–79 (FAAY…LIEG), and 86–106 (DIGG…APRA).

This sequence belongs to the UPF0060 family.

Its subcellular location is the cell inner membrane. This is UPF0060 membrane protein RHE_CH01408 from Rhizobium etli (strain ATCC 51251 / DSM 11541 / JCM 21823 / NBRC 15573 / CFN 42).